We begin with the raw amino-acid sequence, 877 residues long: Leucine--tRNA ligase (877 aa).

A 'HIGH' region motif is present at residues 43–53 (PYPSGRIHMGH). A 'KMSKS' region motif is present at residues 628 to 632 (KMSKS). Lys-631 is an ATP binding site.

The protein belongs to the class-I aminoacyl-tRNA synthetase family.

The protein resides in the cytoplasm. It catalyses the reaction tRNA(Leu) + L-leucine + ATP = L-leucyl-tRNA(Leu) + AMP + diphosphate. This chain is Leucine--tRNA ligase, found in Brucella canis (strain ATCC 23365 / NCTC 10854 / RM-666).